The sequence spans 275 residues: Large ribosomal subunit protein uL2c (275 aa).

Disordered regions lie at residues 32 to 53 (SLSK…TCRH) and 218 to 242 (PTVR…APIG).

Belongs to the universal ribosomal protein uL2 family. Part of the 50S ribosomal subunit.

It localises to the plastid. Its subcellular location is the chloroplast. This Tetradesmus obliquus (Green alga) protein is Large ribosomal subunit protein uL2c (rpl2).